A 371-amino-acid polypeptide reads, in one-letter code: Bifunctional enzyme IspD/IspF (371 aa).

A 2-C-methyl-D-erythritol 4-phosphate cytidylyltransferase region spans residues 1 to 210; that stretch reads MLDISLIMLS…LNLPKPSWDI (210 aa). Positions 211–371 are 2-C-methyl-D-erythritol 2,4-cyclodiphosphate synthase; the sequence is FNGNGFDVHE…NLKYFDWMKL (161 aa). A divalent metal cation-binding residues include Asp-217 and His-219. Residues 217 to 219 and 243 to 244 each bind 4-CDP-2-C-methyl-D-erythritol 2-phosphate; these read DVH and HS. Residue His-251 coordinates a divalent metal cation. 4-CDP-2-C-methyl-D-erythritol 2-phosphate is bound by residues 265 to 267, 270 to 274, 341 to 344, Phe-348, and Arg-351; these read DIG, FPDND, and TTTE.

This sequence in the N-terminal section; belongs to the IspD/TarI cytidylyltransferase family. IspD subfamily. It in the C-terminal section; belongs to the IspF family. The cofactor is a divalent metal cation.

The catalysed reaction is 2-C-methyl-D-erythritol 4-phosphate + CTP + H(+) = 4-CDP-2-C-methyl-D-erythritol + diphosphate. It catalyses the reaction 4-CDP-2-C-methyl-D-erythritol 2-phosphate = 2-C-methyl-D-erythritol 2,4-cyclic diphosphate + CMP. Its pathway is isoprenoid biosynthesis; isopentenyl diphosphate biosynthesis via DXP pathway; isopentenyl diphosphate from 1-deoxy-D-xylulose 5-phosphate: step 2/6. It participates in isoprenoid biosynthesis; isopentenyl diphosphate biosynthesis via DXP pathway; isopentenyl diphosphate from 1-deoxy-D-xylulose 5-phosphate: step 4/6. Bifunctional enzyme that catalyzes the formation of 4-diphosphocytidyl-2-C-methyl-D-erythritol from CTP and 2-C-methyl-D-erythritol 4-phosphate (MEP) (IspD), and catalyzes the conversion of 4-diphosphocytidyl-2-C-methyl-D-erythritol 2-phosphate (CDP-ME2P) to 2-C-methyl-D-erythritol 2,4-cyclodiphosphate (ME-CPP) with a corresponding release of cytidine 5-monophosphate (CMP) (IspF). The protein is Bifunctional enzyme IspD/IspF of Campylobacter lari (strain RM2100 / D67 / ATCC BAA-1060).